The following is a 133-amino-acid chain: Ycf54-like protein (133 aa).

Belongs to the ycf54 family.

The protein is Ycf54-like protein of Synechocystis sp. (strain ATCC 27184 / PCC 6803 / Kazusa).